Here is a 310-residue protein sequence, read N- to C-terminus: Methionyl-tRNA formyltransferase (310 aa).

111 to 114 (SLLP) contacts (6S)-5,6,7,8-tetrahydrofolate.

The protein belongs to the Fmt family.

It carries out the reaction L-methionyl-tRNA(fMet) + (6R)-10-formyltetrahydrofolate = N-formyl-L-methionyl-tRNA(fMet) + (6S)-5,6,7,8-tetrahydrofolate + H(+). Functionally, attaches a formyl group to the free amino group of methionyl-tRNA(fMet). The formyl group appears to play a dual role in the initiator identity of N-formylmethionyl-tRNA by promoting its recognition by IF2 and preventing the misappropriation of this tRNA by the elongation apparatus. This Rhodopseudomonas palustris (strain TIE-1) protein is Methionyl-tRNA formyltransferase.